The sequence spans 527 residues: Inosine-5'-monophosphate dehydrogenase (527 aa).

CBS domains follow at residues 121-183 (FILD…VTAV) and 184-240 (MSTD…PLAS). NAD(+) contacts are provided by residues 277–279 (DSS) and 327–329 (GMG). Residues G329 and G331 each contribute to the K(+) site. An IMP-binding site is contributed by S332. Residue C334 coordinates K(+). The Thioimidate intermediate role is filled by C334. Residues 367-369 (DGG) and 390-391 (GS) contribute to the IMP site. Catalysis depends on R440, which acts as the Proton acceptor. An IMP-binding site is contributed by Q452. Positions 506 to 527 (ASAQTEGNVHGLHSHEKKLYSS) are disordered. E511 and G512 together coordinate K(+). Residues 518–527 (HSHEKKLYSS) are compositionally biased toward basic and acidic residues.

It belongs to the IMPDH/GMPR family. Homotetramer. K(+) serves as cofactor.

Its subcellular location is the cytoplasm. It catalyses the reaction IMP + NAD(+) + H2O = XMP + NADH + H(+). It participates in purine metabolism; XMP biosynthesis via de novo pathway; XMP from IMP: step 1/1. Its activity is regulated as follows. Mycophenolic acid (MPA) is a non-competitive inhibitor that prevents formation of the closed enzyme conformation by binding to the same site as the amobile flap. In contrast, mizoribine monophosphate (MZP) is a competitive inhibitor that induces the closed conformation. MPA is a potent inhibitor of mammalian IMPDHs but a poor inhibitor of the bacterial enzymes. MZP is a more potent inhibitor of bacterial IMPDH. Catalyzes the conversion of inosine 5'-phosphate (IMP) to xanthosine 5'-phosphate (XMP), the first committed and rate-limiting step in the de novo synthesis of guanine nucleotides, and therefore plays an important role in the regulation of cell growth. Part of the gene cluster that mediates the biosynthesis of mycophenolic acid (MPA), the first isolated antibiotic natural product in the world. Does not play a role in the biosynthesis of MPA, but is involved in self resistance to MPA, since MPA acts as an inhibitor of IMP dehydrogenases. In Penicillium brevicompactum, this protein is Inosine-5'-monophosphate dehydrogenase.